The primary structure comprises 513 residues: GMP synthase [glutamine-hydrolyzing] (513 aa).

Residues 3–200 enclose the Glutamine amidotransferase type-1 domain; the sequence is SVLVLDFGSQ…LIDIAGITPD (198 aa). The Nucleophile role is filled by C80. Active-site residues include H174 and E176. The 188-residue stretch at 201 to 388 folds into the GMPS ATP-PPase domain; sequence WSPKHFIDHQ…LGIAEDILMR (188 aa). 228–234 provides a ligand contact to ATP; sequence SGGVDSS.

As to quaternary structure, homodimer.

The catalysed reaction is XMP + L-glutamine + ATP + H2O = GMP + L-glutamate + AMP + diphosphate + 2 H(+). It participates in purine metabolism; GMP biosynthesis; GMP from XMP (L-Gln route): step 1/1. Catalyzes the synthesis of GMP from XMP. In Chlorobium limicola (strain DSM 245 / NBRC 103803 / 6330), this protein is GMP synthase [glutamine-hydrolyzing].